Here is a 163-residue protein sequence, read N- to C-terminus: Phosphopantetheine adenylyltransferase (163 aa).

Threonine 10 contacts substrate. ATP is bound by residues 10-11 (TF) and histidine 18. Residues lysine 42, leucine 74, and arginine 88 each coordinate substrate. Residues 89–91 (GLR), glutamate 99, and 124–130 (NSFISST) each bind ATP.

This sequence belongs to the bacterial CoaD family. In terms of assembly, homohexamer. Mg(2+) is required as a cofactor.

The protein localises to the cytoplasm. It catalyses the reaction (R)-4'-phosphopantetheine + ATP + H(+) = 3'-dephospho-CoA + diphosphate. Its pathway is cofactor biosynthesis; coenzyme A biosynthesis; CoA from (R)-pantothenate: step 4/5. Reversibly transfers an adenylyl group from ATP to 4'-phosphopantetheine, yielding dephospho-CoA (dPCoA) and pyrophosphate. The protein is Phosphopantetheine adenylyltransferase of Shewanella baltica (strain OS223).